The following is a 93-amino-acid chain: Putative membrane protein insertion efficiency factor (93 aa).

The protein belongs to the UPF0161 family.

It localises to the cell inner membrane. In terms of biological role, could be involved in insertion of integral membrane proteins into the membrane. The polypeptide is Putative membrane protein insertion efficiency factor (Cupriavidus taiwanensis (strain DSM 17343 / BCRC 17206 / CCUG 44338 / CIP 107171 / LMG 19424 / R1) (Ralstonia taiwanensis (strain LMG 19424))).